Consider the following 244-residue polypeptide: Adenosylcobinamide-GDP ribazoletransferase (244 aa).

5 helical membrane-spanning segments follow: residues Trp33–Ala53, Pro57–Leu77, Phe109–Val129, Gly132–Trp152, and Phe176–Leu196.

It belongs to the CobS family. Mg(2+) is required as a cofactor.

The protein localises to the cell inner membrane. It catalyses the reaction alpha-ribazole + adenosylcob(III)inamide-GDP = adenosylcob(III)alamin + GMP + H(+). The catalysed reaction is alpha-ribazole 5'-phosphate + adenosylcob(III)inamide-GDP = adenosylcob(III)alamin 5'-phosphate + GMP + H(+). The protein operates within cofactor biosynthesis; adenosylcobalamin biosynthesis; adenosylcobalamin from cob(II)yrinate a,c-diamide: step 7/7. In terms of biological role, joins adenosylcobinamide-GDP and alpha-ribazole to generate adenosylcobalamin (Ado-cobalamin). Also synthesizes adenosylcobalamin 5'-phosphate from adenosylcobinamide-GDP and alpha-ribazole 5'-phosphate. This chain is Adenosylcobinamide-GDP ribazoletransferase, found in Laribacter hongkongensis (strain HLHK9).